The primary structure comprises 422 residues: NADP-dependent malic enzyme (422 aa).

The active-site Proton donor is tyrosine 39. The active-site Proton acceptor is the lysine 94. Lysine 94 is a binding site for substrate. 3 residues coordinate a divalent metal cation: glutamate 136, aspartate 137, and aspartate 162. Residues 195-198 (AGAA), asparagine 286, and asparagine 318 each bind NADP(+). Asparagine 318 provides a ligand contact to substrate.

It belongs to the malic enzymes family. Mg(2+) serves as cofactor. It depends on Mn(2+) as a cofactor.

The catalysed reaction is (S)-malate + NADP(+) = pyruvate + CO2 + NADPH. It catalyses the reaction oxaloacetate + H(+) = pyruvate + CO2. The polypeptide is NADP-dependent malic enzyme (Halomonas elongata (strain ATCC 33173 / DSM 2581 / NBRC 15536 / NCIMB 2198 / 1H9)).